The chain runs to 123 residues: Small ribosomal subunit protein uS12cz/uS12cy (123 aa).

This sequence belongs to the universal ribosomal protein uS12 family. Part of the 30S ribosomal subunit.

It is found in the plastid. It localises to the chloroplast. Its function is as follows. With S4 and S5 plays an important role in translational accuracy. Located at the interface of the 30S and 50S subunits. The sequence is that of Small ribosomal subunit protein uS12cz/uS12cy (rps12-A) from Populus alba (White poplar).